We begin with the raw amino-acid sequence, 129 residues long: Small ribosomal subunit protein uS11 (129 aa).

This sequence belongs to the universal ribosomal protein uS11 family. In terms of assembly, part of the 30S ribosomal subunit. Interacts with proteins S7 and S18. Binds to IF-3.

Its function is as follows. Located on the platform of the 30S subunit, it bridges several disparate RNA helices of the 16S rRNA. Forms part of the Shine-Dalgarno cleft in the 70S ribosome. The chain is Small ribosomal subunit protein uS11 from Ectopseudomonas mendocina (strain ymp) (Pseudomonas mendocina).